A 192-amino-acid chain; its full sequence is Protein GrpE (192 aa).

Belongs to the GrpE family. As to quaternary structure, homodimer.

The protein localises to the cytoplasm. In terms of biological role, participates actively in the response to hyperosmotic and heat shock by preventing the aggregation of stress-denatured proteins, in association with DnaK and GrpE. It is the nucleotide exchange factor for DnaK and may function as a thermosensor. Unfolded proteins bind initially to DnaJ; upon interaction with the DnaJ-bound protein, DnaK hydrolyzes its bound ATP, resulting in the formation of a stable complex. GrpE releases ADP from DnaK; ATP binding to DnaK triggers the release of the substrate protein, thus completing the reaction cycle. Several rounds of ATP-dependent interactions between DnaJ, DnaK and GrpE are required for fully efficient folding. This chain is Protein GrpE, found in Neisseria gonorrhoeae (strain ATCC 700825 / FA 1090).